The primary structure comprises 515 residues: MYTLKEGIDFYIEPMQNKKVTVFDTTLRDGEQTPGVSLTSSQKLEISRQLDKLGVDIIEAGFPISSEGDKESVKSISNAGLETTVCGLARVLKKDIDACFESDVGLVHTFVPTSDVQRIYTIKKSQEEVIQLAVEAVQYIKDHGLKCMFSAMDATRTDPAYLIEVFKAVQEAGCDIINVPDTVGVMVPSAMYRQIKDIAAEITIPIDVHCHNDFGLAVANSLMAVEAGASQVQVTINGIGERAGNADLAQTVMSLASIYGIKTNIRTEYLVETSKMIENYTGIRLPPNTPVVGQNAFSHESGIHSQGVLEKSDTFEPGIMTPEMVGHRRRIVLGKHTGKHAVKQSLESAGVKTSENQLDEIVLRIKEIANKGKQITDADLYAVASAVLGKASSEEELIKLKEVSVMTGNILTPTAVVKADIEGKEIIAAKTGVGPVDAALKAVRDILGESNHFRLQEFRIDAITGGADALADVYIGLENEKGRIVTARSANPDIVMASVEALINAMNLLYKKEKS.

One can recognise a Pyruvate carboxyltransferase domain in the interval 20 to 271; the sequence is VTVFDTTLRD…KTNIRTEYLV (252 aa). A divalent metal cation is bound by residues Asp-29, His-209, His-211, and Asn-245.

It belongs to the alpha-IPM synthase/homocitrate synthase family. Homodimer. A divalent metal cation serves as cofactor.

The catalysed reaction is 3-methyl-2-oxobutanoate + acetyl-CoA + H2O = (2S)-2-isopropylmalate + CoA + H(+). Its pathway is amino-acid biosynthesis; L-leucine biosynthesis; L-leucine from 3-methyl-2-oxobutanoate: step 1/4. In terms of biological role, catalyzes the condensation of the acetyl group of acetyl-CoA with 3-methyl-2-oxobutanoate (2-oxoisovalerate) to form 3-carboxy-3-hydroxy-4-methylpentanoate (2-isopropylmalate). The polypeptide is Probable 2-isopropylmalate synthase (leuA) (Methanosarcina acetivorans (strain ATCC 35395 / DSM 2834 / JCM 12185 / C2A)).